A 413-amino-acid polypeptide reads, in one-letter code: 1-acylglycerol-3-phosphate O-acyltransferase Pnpla3 (413 aa).

The Cytoplasmic segment spans residues 1–42; that stretch reads MYDPERRWSLSFAGCGFLGFYHVGATLCLSERAPHLLRDART. Residues 10-179 form the PNPLA domain; sequence LSFAGCGFLG…SDNVPVLDAK (170 aa). Positions 14-19 match the GXGXXG motif; sequence GCGFLG. A helical; Signal-anchor for type II membrane protein transmembrane segment spans residues 43–63; sequence FFGCSAGALHAVTFVCSLPLG. Residues 45-49 carry the GXSXG motif; it reads GCSAG. Ser-47 (nucleophile) is an active-site residue. Residues 64 to 413 are Lumenal-facing; that stretch reads RIMEILMDLV…HKPQGNSAGL (350 aa). Asp-166 functions as the Proton acceptor in the catalytic mechanism. The DGA/G motif lies at 166–168; the sequence is DGG. Residues Asn-206 and Asn-209 are each glycosylated (N-linked (GlcNAc...) asparagine). The disordered stretch occupies residues 389 to 413; sequence KDDHRMLKHGHHPSPHKPQGNSAGL. Basic residues predominate over residues 394–403; it reads MLKHGHHPSP.

As to expression, restricted to adipose tissue. Expressed in inguinal and epididymal white adipose tissues and in interscapular brown adipose tissue. Also expressed in liver in response to high-sucrose diet.

Its subcellular location is the membrane. It is found in the lipid droplet. It catalyses the reaction a 1-acyl-sn-glycero-3-phosphate + an acyl-CoA = a 1,2-diacyl-sn-glycero-3-phosphate + CoA. The enzyme catalyses a triacylglycerol + H2O = a diacylglycerol + a fatty acid + H(+). It carries out the reaction a 1-acylglycerol + a 1,3-diacylglycerol = a triacylglycerol + glycerol. The catalysed reaction is a 1-acylglycerol + a 1,2-diacylglycerol = a triacylglycerol + glycerol. It catalyses the reaction 2 a 1-acylglycerol = a 1,2-diacylglycerol + glycerol. The enzyme catalyses 1-(9Z-octadecenoyl)-sn-glycero-3-phosphate + (9Z)-octadecenoyl-CoA = 1,2-di-(9Z-octadecenoyl)-sn-glycero-3-phosphate + CoA. It carries out the reaction 1-(9Z-octadecenoyl)-sn-glycero-3-phosphate + hexadecanoyl-CoA = 1-(9Z)-octadecenoyl-2-hexadecanoyl-sn-glycero-3-phosphate + CoA. The catalysed reaction is 1-(9Z-octadecenoyl)-sn-glycero-3-phosphate + (9Z,12Z)-octadecadienoyl-CoA = 1-(9Z)-octadecenoyl-2-(9Z,12Z)-octadecadienoyl-sn-glycero-3-phosphate + CoA. It catalyses the reaction 1-(9Z-octadecenoyl)-sn-glycero-3-phosphate + (5Z,8Z,11Z,14Z)-eicosatetraenoyl-CoA = 1-(9Z)-octadecenoyl-2-(5Z,8Z,11Z,14Z)-eicosatetraenoyl-sn-glycero-3-phosphate + CoA. The enzyme catalyses 2 1-(9Z-octadecenoyl)-glycerol = 1,2-di-(9Z-octadecenoyl)-glycerol + glycerol. It carries out the reaction 1-(9Z-octadecenoyl)-glycerol + 1,2-di-(9Z-octadecenoyl)-glycerol = 1,2,3-tri-(9Z-octadecenoyl)-glycerol + glycerol. The catalysed reaction is 1-(9Z-octadecenoyl)-glycerol + 1,3-di-(9Z-octadecenoyl)-glycerol = 1,2,3-tri-(9Z-octadecenoyl)-glycerol + glycerol. It catalyses the reaction 1,2,3-tri-(9Z-octadecenoyl)-glycerol + H2O = 1,3-di-(9Z-octadecenoyl)-glycerol + (9Z)-octadecenoate + H(+). The enzyme catalyses a 1,2-diacyl-sn-glycero-3-phosphocholine + H2O = a 1-acyl-sn-glycero-3-phosphocholine + a fatty acid + H(+). The protein operates within phospholipid metabolism. Its pathway is glycerolipid metabolism. Specifically catalyzes coenzyme A (CoA)-dependent acylation of 1-acyl-sn-glycerol 3-phosphate (2-lysophosphatidic acid/LPA) to generate phosphatidic acid (PA), an important metabolic intermediate and precursor for both triglycerides and glycerophospholipids. Does not esterify other lysophospholipids. Acyl donors are long chain (at least C16) fatty acyl-CoAs: arachidonoyl-CoA, linoleoyl-CoA, oleoyl-CoA and at a lesser extent palmitoyl-CoA. Additionally possesses low triacylglycerol lipase and CoA-independent acylglycerol transacylase activities and thus may play a role in acyl-chain remodeling of triglycerides. In vitro may express hydrolytic activity against glycerolipids triacylglycerol, diacylglycerol and monoacylglycerol, with a strong preference for oleic acid as the acyl moiety. However, the triacylglycerol hydrolase activity is controversial and may be very low. Possesses phospholipase A2 activity. The polypeptide is 1-acylglycerol-3-phosphate O-acyltransferase Pnpla3 (Mus musculus (Mouse)).